Reading from the N-terminus, the 521-residue chain is Bifunctional purine biosynthesis protein PurH (521 aa).

The MGS-like domain maps to 1 to 145; it reads MIKQALISVS…KNHRDVTVVV (145 aa).

This sequence belongs to the PurH family.

It carries out the reaction (6R)-10-formyltetrahydrofolate + 5-amino-1-(5-phospho-beta-D-ribosyl)imidazole-4-carboxamide = 5-formamido-1-(5-phospho-D-ribosyl)imidazole-4-carboxamide + (6S)-5,6,7,8-tetrahydrofolate. The catalysed reaction is IMP + H2O = 5-formamido-1-(5-phospho-D-ribosyl)imidazole-4-carboxamide. It functions in the pathway purine metabolism; IMP biosynthesis via de novo pathway; 5-formamido-1-(5-phospho-D-ribosyl)imidazole-4-carboxamide from 5-amino-1-(5-phospho-D-ribosyl)imidazole-4-carboxamide (10-formyl THF route): step 1/1. It participates in purine metabolism; IMP biosynthesis via de novo pathway; IMP from 5-formamido-1-(5-phospho-D-ribosyl)imidazole-4-carboxamide: step 1/1. This is Bifunctional purine biosynthesis protein PurH from Burkholderia pseudomallei (strain 1710b).